A 99-amino-acid chain; its full sequence is Co-chaperonin GroES (99 aa).

The protein belongs to the GroES chaperonin family. Heptamer of 7 subunits arranged in a ring. Interacts with the chaperonin GroEL.

Its subcellular location is the cytoplasm. Its function is as follows. Together with the chaperonin GroEL, plays an essential role in assisting protein folding. The GroEL-GroES system forms a nano-cage that allows encapsulation of the non-native substrate proteins and provides a physical environment optimized to promote and accelerate protein folding. GroES binds to the apical surface of the GroEL ring, thereby capping the opening of the GroEL channel. This Corynebacterium jeikeium (strain K411) protein is Co-chaperonin GroES.